The primary structure comprises 306 residues: Bifunctional protein FolD 1 (306 aa).

NADP(+)-binding positions include Gly-168–Ser-170, Ser-193, and Ile-234.

Belongs to the tetrahydrofolate dehydrogenase/cyclohydrolase family. As to quaternary structure, homodimer.

It catalyses the reaction (6R)-5,10-methylene-5,6,7,8-tetrahydrofolate + NADP(+) = (6R)-5,10-methenyltetrahydrofolate + NADPH. It carries out the reaction (6R)-5,10-methenyltetrahydrofolate + H2O = (6R)-10-formyltetrahydrofolate + H(+). It participates in one-carbon metabolism; tetrahydrofolate interconversion. Catalyzes the oxidation of 5,10-methylenetetrahydrofolate to 5,10-methenyltetrahydrofolate and then the hydrolysis of 5,10-methenyltetrahydrofolate to 10-formyltetrahydrofolate. The chain is Bifunctional protein FolD 1 from Rhizobium meliloti (strain 1021) (Ensifer meliloti).